The sequence spans 190 residues: Proline-rich protein 3 (190 aa).

Disordered regions lie at residues 1-94 (MPKR…GLGP), 110-130 (PPFP…KEAR), and 142-161 (KNTY…SDRP). Over residues 37 to 48 (MGPPSLLGPPPM) the composition is skewed to pro residues. The segment at 157–185 (KSDRPVCRHFSKKGHCRYEDHCAFYHPGV) adopts a C3H1-type zinc-finger fold.

This Mus musculus (Mouse) protein is Proline-rich protein 3 (Prr3).